We begin with the raw amino-acid sequence, 257 residues long: Mitochondrial distribution and morphology protein 12 (257 aa).

Positions 1 to 256 (MSFEINWEKL…WPSWVNLDFN (256 aa)) constitute an SMP-LTD domain. The tract at residues 74-98 (YEEDNETSSEMHGRDGQNVGESGEE) is disordered.

This sequence belongs to the MDM12 family. Component of the ER-mitochondria encounter structure (ERMES) or MDM complex, composed of MMM1, MDM10, MDM12 and MDM34. An MMM1 homodimer associates with one molecule of MDM12 on each side in a pairwise head-to-tail manner, and the SMP-LTD domains of MMM1 and MDM12 generate a continuous hydrophobic tunnel for phospholipid trafficking.

It is found in the mitochondrion outer membrane. It localises to the endoplasmic reticulum membrane. Functionally, component of the ERMES/MDM complex, which serves as a molecular tether to connect the endoplasmic reticulum (ER) and mitochondria. Components of this complex are involved in the control of mitochondrial shape and protein biogenesis, and function in nonvesicular lipid trafficking between the ER and mitochondria. MDM12 is required for the interaction of the ER-resident membrane protein MMM1 and the outer mitochondrial membrane-resident beta-barrel protein MDM10. The MDM12-MMM1 subcomplex functions in the major beta-barrel assembly pathway that is responsible for biogenesis of all mitochondrial outer membrane beta-barrel proteins, and acts in a late step after the SAM complex. The MDM10-MDM12-MMM1 subcomplex further acts in the TOM40-specific pathway after the action of the MDM12-MMM1 complex. Essential for establishing and maintaining the structure of mitochondria and maintenance of mtDNA nucleoids. The chain is Mitochondrial distribution and morphology protein 12 from Candida glabrata (strain ATCC 2001 / BCRC 20586 / JCM 3761 / NBRC 0622 / NRRL Y-65 / CBS 138) (Yeast).